Reading from the N-terminus, the 135-residue chain is MTYAIVETSGKQLWVEPGRFYDVDRLPGTEENSPLALSQVLLINHEGQVTLGHPYVPEAVVRARVLQHRRGNKIIVYKMRPKKGTRKKRGHRQPLTRVLIESIELNGTTLATAQSAPPSTSEATTDTTGIPAAEE.

Over residues 109–128 (TLATAQSAPPSTSEATTDTT) the composition is skewed to polar residues. A disordered region spans residues 109–135 (TLATAQSAPPSTSEATTDTTGIPAAEE).

The protein belongs to the bacterial ribosomal protein bL21 family. Part of the 50S ribosomal subunit. Contacts protein L20.

Its function is as follows. This protein binds to 23S rRNA in the presence of protein L20. The chain is Large ribosomal subunit protein bL21 from Synechococcus sp. (strain JA-3-3Ab) (Cyanobacteria bacterium Yellowstone A-Prime).